The following is a 60-amino-acid chain: UPF0337 protein asr4653 (60 aa).

The protein belongs to the UPF0337 (CsbD) family.

In Nostoc sp. (strain PCC 7120 / SAG 25.82 / UTEX 2576), this protein is UPF0337 protein asr4653.